The following is a 781-amino-acid chain: Zinc finger protein klf1 (781 aa).

2 C2H2-type zinc fingers span residues 17 to 41 (YKCD…FRSH) and 47 to 70 (FICP…NQKH).

It localises to the nucleus. Its subcellular location is the cytoplasm. The protein localises to the cytoskeleton. The protein resides in the spindle. Functionally, required for maintaining cell viability in nitrogen-deficient stationary phase (G0) cells. The protein is Zinc finger protein klf1 (klf1) of Schizosaccharomyces pombe (strain 972 / ATCC 24843) (Fission yeast).